A 58-amino-acid chain; its full sequence is Keratin-associated protein 21-3 (58 aa).

In terms of assembly, interacts with hair keratins.

In terms of biological role, in the hair cortex, hair keratin intermediate filaments are embedded in an interfilamentous matrix, consisting of hair keratin-associated proteins (KRTAP), which are essential for the formation of a rigid and resistant hair shaft through their extensive disulfide bond cross-linking with abundant cysteine residues of hair keratins. The matrix proteins include the high-sulfur and high-glycine-tyrosine keratins. The protein is Keratin-associated protein 21-3 (KRTAP21-3) of Homo sapiens (Human).